A 337-amino-acid chain; its full sequence is GTPase Obg (337 aa).

The Obg domain occupies 4 to 162 (SNFIDYVKVC…AWVILELKVL (159 aa)). The OBG-type G domain occupies 163 to 329 (ADVGLVGFPN…LKDLLWTTMN (167 aa)). GTP contacts are provided by residues 169–176 (GFPNAGKS), 194–198 (FTTLA), 216–219 (DIPG), 283–286 (SKSD), and 310–312 (SSY). Mg(2+) contacts are provided by S176 and T196.

It belongs to the TRAFAC class OBG-HflX-like GTPase superfamily. OBG GTPase family. As to quaternary structure, monomer. Mg(2+) is required as a cofactor.

It is found in the cytoplasm. Functionally, an essential GTPase which binds GTP, GDP and possibly (p)ppGpp with moderate affinity, with high nucleotide exchange rates and a fairly low GTP hydrolysis rate. Plays a role in control of the cell cycle, stress response, ribosome biogenesis and in those bacteria that undergo differentiation, in morphogenesis control. The chain is GTPase Obg from Cytophaga hutchinsonii (strain ATCC 33406 / DSM 1761 / CIP 103989 / NBRC 15051 / NCIMB 9469 / D465).